A 267-amino-acid polypeptide reads, in one-letter code: Tryptophan synthase alpha chain (267 aa).

Catalysis depends on proton acceptor residues Glu49 and Asp60.

This sequence belongs to the TrpA family. In terms of assembly, tetramer of two alpha and two beta chains.

It catalyses the reaction (1S,2R)-1-C-(indol-3-yl)glycerol 3-phosphate + L-serine = D-glyceraldehyde 3-phosphate + L-tryptophan + H2O. The protein operates within amino-acid biosynthesis; L-tryptophan biosynthesis; L-tryptophan from chorismate: step 5/5. The alpha subunit is responsible for the aldol cleavage of indoleglycerol phosphate to indole and glyceraldehyde 3-phosphate. The polypeptide is Tryptophan synthase alpha chain (Geotalea uraniireducens (strain Rf4) (Geobacter uraniireducens)).